The sequence spans 72 residues: Crustacean hyperglycemic hormone B (72 aa).

At Gln-1 the chain carries Pyrrolidone carboxylic acid. Position 3 is a D-phenylalanine; in form CHHB-II (Phe-3). Cystine bridges form between Cys-7/Cys-43, Cys-23/Cys-39, and Cys-26/Cys-52. Val-72 is modified (valine amide).

Stereoinversion of L-Phe (in CHHB-I) to D-Phe (in CHHB-II).

Its subcellular location is the secreted. Its function is as follows. Hormone found in the sinus gland of isopods and decapods which controls the blood sugar level. Has a secretagogue action over the amylase released from the midgut gland. May act as a stress hormone and may be involved in the control of molting and reproduction. The sequence is that of Crustacean hyperglycemic hormone B from Cherax destructor (Common yabby crayfish).